Consider the following 347-residue polypeptide: Autoinducer 2 import system permease protein LsrC (347 aa).

9 helical membrane passes run 14-34 (LLAI…YLSV), 39-59 (MVFS…MVML), 72-92 (GMCA…PVAC), 93-113 (LATL…VAWL), 115-135 (IPAI…MLLW), 155-175 (VFLG…LMAW), 213-233 (LNGG…GFIP), 249-269 (VLGG…ILGA), and 284-304 (IPAW…LVFD).

It belongs to the binding-protein-dependent transport system permease family. AraH/RbsC subfamily. As to quaternary structure, the complex is composed of two ATP-binding proteins (LsrA), two transmembrane proteins (LsrC and LsrD) and a solute-binding protein (LsrB).

The protein resides in the cell inner membrane. Functionally, part of the ABC transporter complex LsrABCD involved in autoinducer 2 (AI-2) import. Probably responsible for the translocation of the substrate across the membrane. In Salmonella typhi, this protein is Autoinducer 2 import system permease protein LsrC (lsrC).